The chain runs to 622 residues: Apical membrane antigen 1 (622 aa).

The N-terminal stretch at 1–24 (MRKLYCVLLLSAFEFTYMINFGRG) is a signal peptide. Residues 25–546 (QNYWEHPYQN…EHKPTYDNMK (522 aa)) lie on the Extracellular side of the membrane. 5 cysteine pairs are disulfide-bonded: C149–C302, C217–C247, C263–C275, C320–C418, and C337–C409. Residue N162 is glycosylated (N-linked (GlcNAc...) asparagine). N-linked (GlcNAc...) asparagine glycans are attached at residues N286, N371, N421, N422, and N499. Cystine bridges form between C443–C502, C490–C507, and C492–C509. Residues 547–567 (IIIASSAAVAVLATILMVYLY) traverse the membrane as a helical segment. Residues 568–622 (KRKGNAEKYDKMDQPQDYGKSTSRNDEMLDPEASFWGEEKRASHTTPVLMEKPYY) are Cytoplasmic-facing. The segment at 577-607 (DKMDQPQDYGKSTSRNDEMLDPEASFWGEEK) is disordered.

This sequence belongs to the apicomplexan parasites AMA1 family.

The protein localises to the membrane. Involved in parasite invasion of erythrocytes. In Plasmodium falciparum (isolate Camp / Malaysia), this protein is Apical membrane antigen 1 (AMA-1).